A 234-amino-acid chain; its full sequence is Core atranone cluster (CAC) protein 1 (234 aa).

The protein operates within mycotoxin biosynthesis. Its function is as follows. Part of the core atranone cluster (CAC) which products are predicted to catalyze most or all steps of mycotoxin atranone synthesis, starting from geranylgeranyl pyrophosphate (GGPP). The initial cyclization of GGPP to dolabellane is probably performed by the terpene cyclase ATR13. The Baeyer-Villiger oxidation near the end of the atranone synthesis, which converts atranones D and E to atranones F and G is predicted to be catalyzed by the monooxygenase ATR8. Of the CAC's other predicted gene products, the reducing PKS ATR6 might synthesize a polyketide chain. This polyketide is probably transferred onto the atranone backbone by the polyketide transferase ATR5. Other predicted CAC products include 4 oxygenases (ATR2, ATR3, ATR4, and ATR14), 3 short-chain reductases (ATR7, ATR9, and ATR10), and a methyltransferase (ATR12). These may all be involved in the various steps of atranone biosynthesis, although their specific roles must await experimental determination. The protein is Core atranone cluster (CAC) protein 1 of Stachybotrys chlorohalonatus (strain IBT 40285).